The following is an 822-amino-acid chain: AP-1 complex subunit gamma-1 (822 aa).

The segment at 597–628 (EIVQTNGETEPAPLETKPPPSGPQPTSQANDL) is disordered. One can recognise a GAE domain in the interval 702 to 817 (AGIPSITAYS…QDLAEVNNFP (116 aa)).

The protein belongs to the adaptor complexes large subunit family. In terms of assembly, adaptor protein complex 1 (AP-1) is a heterotetramer composed of two large adaptins (gamma-type subunit AP1G1 and beta-type subunit AP1B1), a medium adaptin (mu-type subunit AP1M1 or AP1M2) and a small adaptin (sigma-type subunit AP1S1 or AP1S2 or AP1S3). Interacts (via GAE domain) with RABEP1. Interacts with SYNRG/gamma-synergin. Interacts with EPS15. Interacts (via GAE domain) with AP1AR (via coiled-coil domain). Interacts with CLN3 (via dileucine motif); this interaction facilitates lysosomal targeting. Interacts (via GAE domain) with AFTPH/aftiphilin; the interaction is required to recruit AFTPH/aftiphilin to the perinuclear region of the cell. As to expression, widely expressed.

The protein resides in the golgi apparatus. The protein localises to the cytoplasmic vesicle. It localises to the clathrin-coated vesicle membrane. It is found in the cytoplasm. Its subcellular location is the perinuclear region. The protein resides in the clathrin-coated vesicle. The protein localises to the membrane. It localises to the clathrin-coated pit. Functionally, subunit of clathrin-associated adaptor protein complex 1 that plays a role in protein sorting in the late-Golgi/trans-Golgi network (TGN) and/or endosomes. The AP complexes mediate both the recruitment of clathrin to membranes and the recognition of sorting signals within the cytosolic tails of transmembrane cargo molecules. In association with AFTPH/aftiphilin in the aftiphilin/p200/gamma-synergin complex, involved in the trafficking of transferrin from early to recycling endosomes, and the membrane trafficking of furin and the lysosomal enzyme cathepsin D between the trans-Golgi network (TGN) and endosomes. This Homo sapiens (Human) protein is AP-1 complex subunit gamma-1 (AP1G1).